A 151-amino-acid polypeptide reads, in one-letter code: Meiotically up-regulated gene 114 protein (151 aa).

The protein resides in the cytoplasm. Has a role in meiosis. The chain is Meiotically up-regulated gene 114 protein (mug114) from Schizosaccharomyces pombe (strain 972 / ATCC 24843) (Fission yeast).